The following is a 146-amino-acid chain: Hemoglobin subunit beta (146 aa).

The region spanning 2–146 (HWTAEEKQLI…VAHALARKYH (145 aa)) is the Globin domain. Residues His-63 and His-92 each contribute to the heme b site.

The protein belongs to the globin family. Heterotetramer of two alpha chains and two beta chains. In terms of tissue distribution, red blood cells.

Functionally, involved in oxygen transport from the lung to the various peripheral tissues. This Chloephaga melanoptera (Andean goose) protein is Hemoglobin subunit beta (HBB).